The chain runs to 377 residues: Chaperone protein DnaJ (377 aa).

The J domain occupies 5–70 (DYYEVLGVSR…DKKAAYDQFG (66 aa)). The CR-type zinc finger occupies 133–211 (GLTKELRIPT…CHGDGRVEKS (79 aa)). Positions 146, 149, 163, 166, 185, 188, 199, and 202 each coordinate Zn(2+). 4 CXXCXGXG motif repeats span residues 146 to 153 (CDLCEGSG), 163 to 170 (CGTCHGQG), 185 to 192 (CPTCHGRG), and 199 to 206 (CTKCHGDG).

This sequence belongs to the DnaJ family. Homodimer. It depends on Zn(2+) as a cofactor.

It localises to the cytoplasm. Its function is as follows. Participates actively in the response to hyperosmotic and heat shock by preventing the aggregation of stress-denatured proteins and by disaggregating proteins, also in an autonomous, DnaK-independent fashion. Unfolded proteins bind initially to DnaJ; upon interaction with the DnaJ-bound protein, DnaK hydrolyzes its bound ATP, resulting in the formation of a stable complex. GrpE releases ADP from DnaK; ATP binding to DnaK triggers the release of the substrate protein, thus completing the reaction cycle. Several rounds of ATP-dependent interactions between DnaJ, DnaK and GrpE are required for fully efficient folding. Also involved, together with DnaK and GrpE, in the DNA replication of plasmids through activation of initiation proteins. This Shewanella baltica (strain OS223) protein is Chaperone protein DnaJ.